The following is a 268-amino-acid chain: WUSCHEL-related homeobox 12 (268 aa).

The segment covering 1–16 has biased composition (polar residues); sequence MNQEGASHSPSSTSTE. Disordered regions lie at residues 1-22 and 173-198; these read MNQEGASHSPSSTSTEPVRARW and SDHNHQQQHHSSNAASVLNPSDQNSN. Positions 17-81 form a DNA-binding region, homeobox; WUS-type; the sequence is PVRARWSPKP…NRRSRSRRRH (65 aa).

This sequence belongs to the WUS homeobox family.

Its subcellular location is the nucleus. Its function is as follows. Transcription factor which may be involved in developmental processes. The sequence is that of WUSCHEL-related homeobox 12 (WOX12) from Arabidopsis thaliana (Mouse-ear cress).